Here is a 156-residue protein sequence, read N- to C-terminus: Small ribosomal subunit protein uS7 (156 aa).

Belongs to the universal ribosomal protein uS7 family. As to quaternary structure, part of the 30S ribosomal subunit. Contacts proteins S9 and S11.

Its function is as follows. One of the primary rRNA binding proteins, it binds directly to 16S rRNA where it nucleates assembly of the head domain of the 30S subunit. Is located at the subunit interface close to the decoding center, probably blocks exit of the E-site tRNA. In Rhodopseudomonas palustris (strain BisB18), this protein is Small ribosomal subunit protein uS7.